The chain runs to 24 residues: Major pollen allergen Ole e 4 (24 aa).

Belongs to the glycosyl hydrolase 17 family. Post-translationally, the N-terminus is blocked.

This Olea europaea (Common olive) protein is Major pollen allergen Ole e 4.